The primary structure comprises 496 residues: Squalene epoxidase ERG1 (496 aa).

Residues Val4 to Phe24 traverse the membrane as a helical segment. Residues Val15 to Ile16, Glu35 to Arg36, Arg43, Arg148, Val164, Asp332, and Met345 each bind FAD. 2 consecutive transmembrane segments (helical) span residues Ile431 to Val451 and Leu466 to Phe486.

Belongs to the squalene monooxygenase family. The cofactor is FAD.

The protein resides in the microsome membrane. The protein localises to the endoplasmic reticulum membrane. The catalysed reaction is squalene + reduced [NADPH--hemoprotein reductase] + O2 = (S)-2,3-epoxysqualene + oxidized [NADPH--hemoprotein reductase] + H2O + H(+). It functions in the pathway terpene metabolism; lanosterol biosynthesis; lanosterol from farnesyl diphosphate: step 2/3. With respect to regulation, activity is completely abolished by Triton X-100, deoxycholate or Cu(2+), and partially inhibited by thiol reagents, rotenone and antimycin A. The allylamine antimycotic agents naftifine and SF 86-327are potent inhibitors and show apparently non-competitive kinetics with respect to the substrate squalene. Its function is as follows. Squalene epoxidase; part of the third module of ergosterol biosynthesis pathway that includes the late steps of the pathway. Erg1 catalyzes the epoxidation of squalene into 2,3-epoxysqualene. The third module or late pathway involves the ergosterol synthesis itself through consecutive reactions that mainly occur in the endoplasmic reticulum (ER) membrane. Firstly, the squalene synthase ERG9 catalyzes the condensation of 2 farnesyl pyrophosphate moieties to form squalene, which is the precursor of all steroids. Squalene synthase is crucial for balancing the incorporation of farnesyl diphosphate (FPP) into sterol and nonsterol isoprene synthesis. Secondly, the squalene epoxidase ERG1 catalyzes the stereospecific oxidation of squalene to (S)-2,3-epoxysqualene, which is considered to be a rate-limiting enzyme in steroid biosynthesis. Then, the lanosterol synthase ERG7 catalyzes the cyclization of (S)-2,3 oxidosqualene to lanosterol, a reaction that forms the sterol core. In the next steps, lanosterol is transformed to zymosterol through a complex process involving various demethylation, reduction and desaturation reactions. The lanosterol 14-alpha-demethylase ERG11 (also known as CYP51) catalyzes C14-demethylation of lanosterol to produce 4,4'-dimethyl cholesta-8,14,24-triene-3-beta-ol, which is critical for ergosterol biosynthesis. The C-14 reductase ERG24 reduces the C14=C15 double bond of 4,4-dimethyl-cholesta-8,14,24-trienol to produce 4,4-dimethyl-cholesta-8,24-dienol. 4,4-dimethyl-cholesta-8,24-dienol is substrate of the C-4 demethylation complex ERG25-ERG26-ERG27 in which ERG25 catalyzes the three-step monooxygenation required for the demethylation of 4,4-dimethyl and 4alpha-methylsterols, ERG26 catalyzes the oxidative decarboxylation that results in a reduction of the 3-beta-hydroxy group at the C-3 carbon to an oxo group, and ERG27 is responsible for the reduction of the keto group on the C-3. ERG28 has a role as a scaffold to help anchor ERG25, ERG26 and ERG27 to the endoplasmic reticulum and ERG29 regulates the activity of the iron-containing C4-methylsterol oxidase ERG25. Then, the sterol 24-C-methyltransferase ERG6 catalyzes the methyl transfer from S-adenosyl-methionine to the C-24 of zymosterol to form fecosterol. The C-8 sterol isomerase ERG2 catalyzes the reaction which results in unsaturation at C-7 in the B ring of sterols and thus converts fecosterol to episterol. The sterol-C5-desaturase ERG3 then catalyzes the introduction of a C-5 double bond in the B ring to produce 5-dehydroepisterol. The C-22 sterol desaturase ERG5 further converts 5-dehydroepisterol into ergosta-5,7,22,24(28)-tetraen-3beta-ol by forming the C-22(23) double bond in the sterol side chain. Finally, ergosta-5,7,22,24(28)-tetraen-3beta-ol is substrate of the C-24(28) sterol reductase ERG4 to produce ergosterol. In Candida albicans (strain SC5314 / ATCC MYA-2876) (Yeast), this protein is Squalene epoxidase ERG1.